The following is a 430-amino-acid chain: MATLSLKPSQRYRLSDWLTNSYLLSTNAERQRDASHQIRQEARILRNETNNQTVWDEHDNRTRLAERIDTVNRWKEMLDKCLTDLDAEIDSLTQAKESVEQSLQAKNLPLDVAIECLTLRESRRDIDVVKDPVEEELMKEVEVIEATKKVLQEKISQAFQHLCLLQEIRQQLNSDHRDKMETLEIDRGCLSLNLTAPNLSLKVNPTRVPKDSTTLQEWDDFTRFNKNRADTEMKASIELRETIALAIAQTNNELEAQRVATEFTFRKRLREMESLYSELKWQEKNTLEEIAELQADIRRLEEDLRRKMMNLKLAHTRLESRTYRPNVELCRDQTQYGLIDEVHQLEATISIMKQKLAQTQDALDALFKHLARIQADIACKTNTMLLDTKCMDIRRKLTVPAEKFVPQVDTFTRTTNRTLSPLKTCQLELN.

Coiled coils occupy residues 75-162 (KEML…FQHL) and 226-380 (KNRA…IACK).

This sequence belongs to the tektin family. Microtubule inner protein component of sperm flagellar doublet microtubules. May interact with CCDC172. Post-translationally, tyrosine phosphorylated. Ubiquitinated, leading to its degradation. Deubiquitinated by USP16, promoting its stability.

It localises to the cytoplasm. It is found in the cytoskeleton. The protein localises to the cilium axoneme. Its subcellular location is the flagellum axoneme. The protein resides in the microtubule organizing center. Functionally, microtubule inner protein (MIP) part of the dynein-decorated doublet microtubules (DMTs) in cilia and flagellar axoneme. Plays a key role in the assembly or attachment of the inner dynein arm to microtubules in sperm flagella and tracheal cilia. Forms filamentous polymers in the walls of ciliary and flagellar microtubules. The protein is Tektin-2 (Tekt2) of Rattus norvegicus (Rat).